A 713-amino-acid polypeptide reads, in one-letter code: KNR4/SMI1 homolog (713 aa).

Disordered stretches follow at residues proline 18–aspartate 129, isoleucine 255–alanine 274, arginine 400–alanine 457, and glutamate 500–lysine 713. Positions alanine 22–alanine 34 are enriched in low complexity. Polar residues predominate over residues glycine 35 to threonine 65. Low complexity-rich tracts occupy residues asparagine 66–alanine 81 and serine 88–serine 103. Residues asparagine 260–glycine 270 show a composition bias toward polar residues. Residues arginine 400–glutamine 412 show a composition bias toward basic and acidic residues. Positions alanine 413–glutamine 429 are enriched in low complexity. Basic and acidic residues-rich tracts occupy residues glutamate 507 to lysine 605 and alanine 613 to glutamate 662. Acidic residues predominate over residues glutamate 663–aspartate 686. Residues serine 701 to lysine 713 show a composition bias toward basic residues.

It belongs to the KNR4/SMI1 family.

The chain is KNR4/SMI1 homolog from Yarrowia lipolytica (strain CLIB 122 / E 150) (Yeast).